The chain runs to 209 residues: MKTLVILSSILGDRSNSKQLADHLLARLKQSEPGGTVKIRDLAADPVPYFDGATVGALFTPAEARNAEQQRIAALSDDLVAELFDADRIVFAVPVYNFNLPAQFKSYIDHIARAGVTFRYTAEGKPEGLVQGKQVLMLIARGGKSEGTPDDTMTPYLKQMLAFLGMTDVTFIAAEGMAMGELAAQEGLALARQRIDALSLDARQGLAAA.

Residues Ser9 and 15–17 (SNS) each bind FMN.

This sequence belongs to the azoreductase type 1 family. As to quaternary structure, homodimer. Requires FMN as cofactor.

It catalyses the reaction 2 a quinone + NADH + H(+) = 2 a 1,4-benzosemiquinone + NAD(+). The catalysed reaction is N,N-dimethyl-1,4-phenylenediamine + anthranilate + 2 NAD(+) = 2-(4-dimethylaminophenyl)diazenylbenzoate + 2 NADH + 2 H(+). In terms of biological role, quinone reductase that provides resistance to thiol-specific stress caused by electrophilic quinones. Its function is as follows. Also exhibits azoreductase activity. Catalyzes the reductive cleavage of the azo bond in aromatic azo compounds to the corresponding amines. In Bordetella parapertussis (strain 12822 / ATCC BAA-587 / NCTC 13253), this protein is FMN-dependent NADH:quinone oxidoreductase.